We begin with the raw amino-acid sequence, 142 residues long: E1B protein, small T-antigen (142 aa).

It belongs to the adenoviridae E1B 19 kDa protein family.

The protein localises to the host cell membrane. It localises to the host nucleus envelope. It is found in the host nucleus lamina. In terms of biological role, putative adenovirus Bcl-2 homolog that inhibits apoptosis induced by TNF or FAS pathways, as well as p53-mediated apoptosis. Without E1B 19K function, virus production is compromised because of premature death of host cell. Interacts with Bax protein in cell lysates. This Homo sapiens (Human) protein is E1B protein, small T-antigen.